Consider the following 213-residue polypeptide: Protein PAE0745 (213 aa).

The AMMECR1 domain maps to 8 to 201 (EEGTFLVRLA…EKSPGGEVYE (194 aa)).

In Pyrobaculum aerophilum (strain ATCC 51768 / DSM 7523 / JCM 9630 / CIP 104966 / NBRC 100827 / IM2), this protein is Protein PAE0745.